Here is a 417-residue protein sequence, read N- to C-terminus: Interferon regulatory factor 3 (417 aa).

A Phosphothreonine modification is found at Thr-3. The IRF tryptophan pentad repeat DNA-binding region spans 5–111 (KPRILPWLIS…DPHKIYEFVN (107 aa)). Ser-14 carries the post-translational modification Phosphoserine. A Phosphothreonine modification is found at Thr-75. Phosphoserine is present on residues Ser-97 and Ser-123. Disordered stretches follow at residues 111–134 (NSGV…TSDT) and 147–170 (DLSP…LQSP). The mediates interaction with ZDHHC11 stretch occupies residues 140 to 417 (EKLLSDMDLS…LQDLAEDMDF (278 aa)). Ser-184 carries the post-translational modification Phosphoserine. A Glycyl lysine isopeptide (Lys-Gly) (interchain with G-Cter in ISG15) cross-link involves residue Lys-189. The interval 196-356 (EDWEFEVTAF…SWPQDQPWIK (161 aa)) is interaction with HERC5. Thr-249 is modified (phosphothreonine). Residues Cys-263 and Cys-285 are joined by a disulfide bond. Glycyl lysine isopeptide (Lys-Gly) (interchain with G-Cter in ISG15) cross-links involve residues Lys-356 and Lys-362. The residue at position 362 (Lys-362) is an N6-acetyllysine. Ser-381 bears the Phosphoserine mark. Ser-382 carries the diphosphoserine modification. Ser-382 is modified (phosphoserine; by TBK1). Residue Ser-392 is modified to Phosphoserine; by IKKE. Position 394 is a phosphoserine (Ser-394). Position 400 is a phosphothreonine (Thr-400).

It belongs to the IRF family. As to quaternary structure, monomer. Homodimer; phosphorylation-induced. Interacts (when phosphorylated) with CREBBP. Interacts with MAVS (via phosphorylated pLxIS motif). Interacts with TICAM1 (via phosphorylated pLxIS motif). Interacts with STING1 (via phosphorylated pLxIS motif). Interacts with IKBKE and TBK1. Interacts with TICAM2. Interacts with RBCK1. Interacts with HERC5. Interacts with DDX3X; the interaction allows the phosphorylation and activation of IRF3 by IKBKE. Interacts with TRIM21 and ULK1, in the presence of TRIM21; this interaction leads to IRF3 degradation by autophagy. Interacts with RIOK3; RIOK3 probably mediates the interaction of TBK1 with IRF3. Interacts with ILRUN; the interaction inhibits IRF3 binding to its DNA consensus sequence. Interacts with LYAR; this interaction impairs IRF3 DNA-binding activity. Interacts with TRAF3. Interacts with ZDHHC11; ZDHHC11 recruits IRF3 to STING1 upon DNA virus infection and thereby promotes IRF3 activation. Interacts with HSP90AA1; the interaction mediates IRF3 association with TOMM70. Interacts with BCL2; the interaction decreases upon Sendai virus infection. Interacts with BAX; the interaction is direct, increases upon virus infection and mediates the formation of the apoptosis complex TOMM70:HSP90AA1:IRF3:BAX. Interacts with DDX56. Interacts with NBR1. Constitutively phosphorylated on many Ser/Thr residues. Activated following phosphorylation by TBK1 and IKBKE. Innate adapter proteins, such as MAVS, STING1 or TICAM1, are first activated by viral RNA, cytosolic DNA, and bacterial lipopolysaccharide (LPS), respectively, leading to activation of the kinases TBK1 and IKBKE. These kinases then phosphorylate the adapter proteins on the pLxIS motif, leading to recruitment of IRF3, thereby licensing IRF3 for phosphorylation by TBK1. Phosphorylation at Ser-382 is followed by pyrophosphorylation at the same residue, promoting phosphorylation at Ser-392. Phosphorylated IRF3 dissociates from the adapter proteins, dimerizes, and then enters the nucleus to induce IFNs. In terms of processing, pyrophosphorylated by UAP1 following phosphorylation at Ser-382 by TBK1. Pyrophosphorylation promotes subsequent phosphorylation at Ser-392, leading to homodimerization of IRF3. Post-translationally, acetylation at Lys-362 by KAT8 inhibits recruimtent to promoters and transcription factor activity. Acetylation by KAT8 is promoted by phosphorylation at Ser-392. Ubiquitinated; ubiquitination involves RBCK1 leading to proteasomal degradation. Polyubiquitinated; ubiquitination involves TRIM21 leading to proteasomal degradation. Ubiquitinated by UBE3C, leading to its degradation. Deubiquitinated by USP5 on both 'Lys-48'-linked unanchored and 'Lys-63'-linked anchored polyubiquitin, leading to inhibition of anti-RNA viral innate immunity. In terms of processing, ISGylated by HERC5 resulting in sustained IRF3 activation and in the inhibition of IRF3 ubiquitination by disrupting PIN1 binding. The phosphorylation state of IRF3 does not alter ISGylation. Post-translationally, proteolytically cleaved by apoptotic caspases during apoptosis, leading to its inactivation. Cleavage by CASP3 during virus-induced apoptosis inactivates it, preventing cytokine overproduction.

The protein resides in the cytoplasm. Its subcellular location is the nucleus. It is found in the mitochondrion. Its activity is regulated as follows. In the absence of viral infection, maintained as a monomer in an autoinhibited state. Phosphorylation by TBK1 and IKBKE disrupts this autoinhibition leading to the liberation of the DNA-binding and dimerization activities and its nuclear localization where it can activate type I IFN and ISG genes. Phosphorylation and activation follow the following steps: innate adapter proteins, such as MAVS, STING1 or TICAM1, are first activated by viral RNA, cytosolic DNA and bacterial lipopolysaccharide (LPS), respectively, leading to activation of the kinases TBK1 and IKBKE. These kinases then phosphorylate the adapter proteins on their pLxIS motif, leading to recruitment of IRF3, thereby licensing IRF3 for phosphorylation by TBK1. Phosphorylated IRF3 dissociates from the adapter proteins, dimerizes, and then enters the nucleus to induce IFNs. Functionally, key transcriptional regulator of type I interferon (IFN)-dependent immune responses which plays a critical role in the innate immune response against DNA and RNA viruses. Regulates the transcription of type I IFN genes (IFN-alpha and IFN-beta) and IFN-stimulated genes (ISG) by binding to an interferon-stimulated response element (ISRE) in their promoters. Acts as a more potent activator of the IFN-beta (IFNB) gene than the IFN-alpha (IFNA) gene and plays a critical role in both the early and late phases of the IFNA/B gene induction. Found in an inactive form in the cytoplasm of uninfected cells and following viral infection, double-stranded RNA (dsRNA), or toll-like receptor (TLR) signaling, is phosphorylated by IKBKE and TBK1 kinases. This induces a conformational change, leading to its dimerization and nuclear localization and association with CREB binding protein (CREBBP) to form dsRNA-activated factor 1 (DRAF1), a complex which activates the transcription of the type I IFN and ISG genes. Can activate distinct gene expression programs in macrophages and can induce significant apoptosis in primary macrophages. This Bos taurus (Bovine) protein is Interferon regulatory factor 3 (IRF3).